A 143-amino-acid polypeptide reads, in one-letter code: Small ribosomal subunit protein uS12 (143 aa).

A compositionally biased stretch (basic residues) spans 1-19 (MGKPRGLRTARKHVNHRRD). The segment at 1 to 23 (MGKPRGLRTARKHVNHRRDQRWA) is disordered. Residue proline 62 is modified to 3-hydroxyproline.

It belongs to the universal ribosomal protein uS12 family. Component of the 40S small ribosomal subunit. Hydroxylation at Pro-62 affects translation termination efficiency.

The protein resides in the cytoplasm. It localises to the cytosol. Its subcellular location is the rough endoplasmic reticulum. This chain is Small ribosomal subunit protein uS12 (RpS23), found in Drosophila melanogaster (Fruit fly).